The chain runs to 861 residues: Nuclear pore complex protein NUP93A (861 aa).

This sequence belongs to the nucleoporin interacting component (NIC) family. As to quaternary structure, part of the nuclear pore complex (NPC). The NPC has an eight-fold symmetrical structure comprising a central transport channel and two rings, the cytoplasmic and nuclear rings, to which eight filaments are attached. The cytoplasmic filaments have loose ends, while the nuclear filaments are joined in a distal ring, forming a nuclear basket. NPCs are highly dynamic in configuration and composition, and can be devided in 3 subcomplexes, the NUP62 subcomplex, the NUP107-160 subcomplex and the NUP93 subcomplex, containing approximately 30 different nucleoporin proteins.

The protein localises to the nucleus envelope. The protein resides in the nucleus. It is found in the nuclear pore complex. The polypeptide is Nuclear pore complex protein NUP93A (Arabidopsis thaliana (Mouse-ear cress)).